The primary structure comprises 508 residues: Photosystem II CP47 reaction center protein (508 aa).

6 helical membrane-spanning segments follow: residues 21 to 36, 101 to 115, 140 to 156, 203 to 218, 237 to 252, and 457 to 472; these read AVHLMHTALVSGWAGS, ILLSGALFMAAIWHW, GIHLFLSGLLCFGFGAF, IAAGILGILAGLFHLS, VLSSSIAAVFWAAFVV, and WFALLFFFGHIWHGAR.

This sequence belongs to the PsbB/PsbC family. PsbB subfamily. As to quaternary structure, PSII is composed of 1 copy each of membrane proteins PsbA, PsbB, PsbC, PsbD, PsbE, PsbF, PsbH, PsbI, PsbJ, PsbK, PsbL, PsbM, PsbT, PsbX, PsbY, PsbZ, Psb30/Ycf12, at least 3 peripheral proteins of the oxygen-evolving complex and a large number of cofactors. It forms dimeric complexes. It depends on Binds multiple chlorophylls. PSII binds additional chlorophylls, carotenoids and specific lipids. as a cofactor.

It is found in the plastid. The protein localises to the chloroplast thylakoid membrane. Its function is as follows. One of the components of the core complex of photosystem II (PSII). It binds chlorophyll and helps catalyze the primary light-induced photochemical processes of PSII. PSII is a light-driven water:plastoquinone oxidoreductase, using light energy to abstract electrons from H(2)O, generating O(2) and a proton gradient subsequently used for ATP formation. The chain is Photosystem II CP47 reaction center protein from Nephroselmis olivacea (Green alga).